The primary structure comprises 330 residues: Ketol-acid reductoisomerase (NADP(+)) (330 aa).

One can recognise a KARI N-terminal Rossmann domain in the interval 3–184 (LPVYYDKDID…GGGRMGVLET (182 aa)). Residues 26–29 (YGAQ), serine 52, and serine 54 contribute to the NADP(+) site. The active site involves histidine 109. Residue glycine 135 coordinates NADP(+). Residues 185-329 (SFKEECESDL…EILRAPFNHK (145 aa)) form the KARI C-terminal knotted domain. Aspartate 193, glutamate 197, glutamate 229, and glutamate 233 together coordinate Mg(2+). Substrate is bound at residue serine 254.

This sequence belongs to the ketol-acid reductoisomerase family. Mg(2+) is required as a cofactor.

The catalysed reaction is (2R)-2,3-dihydroxy-3-methylbutanoate + NADP(+) = (2S)-2-acetolactate + NADPH + H(+). It catalyses the reaction (2R,3R)-2,3-dihydroxy-3-methylpentanoate + NADP(+) = (S)-2-ethyl-2-hydroxy-3-oxobutanoate + NADPH + H(+). It functions in the pathway amino-acid biosynthesis; L-isoleucine biosynthesis; L-isoleucine from 2-oxobutanoate: step 2/4. The protein operates within amino-acid biosynthesis; L-valine biosynthesis; L-valine from pyruvate: step 2/4. Involved in the biosynthesis of branched-chain amino acids (BCAA). Catalyzes an alkyl-migration followed by a ketol-acid reduction of (S)-2-acetolactate (S2AL) to yield (R)-2,3-dihydroxy-isovalerate. In the isomerase reaction, S2AL is rearranged via a Mg-dependent methyl migration to produce 3-hydroxy-3-methyl-2-ketobutyrate (HMKB). In the reductase reaction, this 2-ketoacid undergoes a metal-dependent reduction by NADPH to yield (R)-2,3-dihydroxy-isovalerate. The sequence is that of Ketol-acid reductoisomerase (NADP(+)) from Helicobacter pylori (strain ATCC 700392 / 26695) (Campylobacter pylori).